The chain runs to 709 residues: Eukaryotic translation initiation factor 3 subunit B (709 aa).

Residues 1 to 98 (MSINEEEYLR…LFIQYKNVAD (98 aa)) form a sufficient for interaction with HCR1 and TIF32 region. The tract at residues 1–221 (MSINEEEYLR…GIQAWGGADF (221 aa)) is sufficient for interaction with PIC8. Residues 37–124 (NYVIVDGAPI…HRLLVNRLSD (88 aa)) form the RRM domain.

This sequence belongs to the eIF-3 subunit B family. In terms of assembly, component of the eukaryotic translation initiation factor 3 (eIF-3) complex.

It is found in the cytoplasm. RNA-binding component of the eukaryotic translation initiation factor 3 (eIF-3) complex, which is involved in protein synthesis of a specialized repertoire of mRNAs and, together with other initiation factors, stimulates binding of mRNA and methionyl-tRNAi to the 40S ribosome. The eIF-3 complex specifically targets and initiates translation of a subset of mRNAs involved in cell proliferation. The chain is Eukaryotic translation initiation factor 3 subunit B from Lodderomyces elongisporus (strain ATCC 11503 / CBS 2605 / JCM 1781 / NBRC 1676 / NRRL YB-4239) (Yeast).